The primary structure comprises 190 residues: Sec-independent protein translocase protein TatB (190 aa).

Residues 2–22 (LPDIGGTELLVIAAVALIVVG) traverse the membrane as a helical segment. A disordered region spans residues 130-190 (IVSKPARKPP…KASTNSDITS (61 aa)). Basic residues predominate over residues 134–144 (PARKPPAKKAA). The span at 145 to 163 (AKPAAKAELVSKPKASAKA) shows a compositional bias: low complexity.

The protein belongs to the TatB family. The Tat system comprises two distinct complexes: a TatABC complex, containing multiple copies of TatA, TatB and TatC subunits, and a separate TatA complex, containing only TatA subunits. Substrates initially bind to the TatABC complex, which probably triggers association of the separate TatA complex to form the active translocon.

Its subcellular location is the cell inner membrane. In terms of biological role, part of the twin-arginine translocation (Tat) system that transports large folded proteins containing a characteristic twin-arginine motif in their signal peptide across membranes. Together with TatC, TatB is part of a receptor directly interacting with Tat signal peptides. TatB may form an oligomeric binding site that transiently accommodates folded Tat precursor proteins before their translocation. The chain is Sec-independent protein translocase protein TatB from Caulobacter sp. (strain K31).